The chain runs to 487 residues: UDP-N-acetylmuramate--L-alanine ligase (487 aa).

An ATP-binding site is contributed by 124 to 130 (GTHGKTT).

This sequence belongs to the MurCDEF family.

The protein resides in the cytoplasm. The catalysed reaction is UDP-N-acetyl-alpha-D-muramate + L-alanine + ATP = UDP-N-acetyl-alpha-D-muramoyl-L-alanine + ADP + phosphate + H(+). It participates in cell wall biogenesis; peptidoglycan biosynthesis. Its function is as follows. Cell wall formation. The polypeptide is UDP-N-acetylmuramate--L-alanine ligase (Acaryochloris marina (strain MBIC 11017)).